Here is a 657-residue protein sequence, read N- to C-terminus: UvrABC system protein B (657 aa).

One can recognise a Helicase ATP-binding domain in the interval 24-409 (AGVRNQVKSQ…SGHIVQQIIR (386 aa)). 37 to 44 (GTTGSGKT) serves as a coordination point for ATP. The Beta-hairpin motif lies at 90 to 113 (YYDYYQPEAYIARSDTYIEKSLLI). The 164-residue stretch at 426–589 (QVDDLLEEIR…IVPKPIIKAI (164 aa)) folds into the Helicase C-terminal domain. The 36-residue stretch at 617-652 (EEQIKKYEALMQRAAKEFRFNEAAKYRDAMQACKEQ) folds into the UVR domain.

It belongs to the UvrB family. As to quaternary structure, forms a heterotetramer with UvrA during the search for lesions. Interacts with UvrC in an incision complex.

Its subcellular location is the cytoplasm. The UvrABC repair system catalyzes the recognition and processing of DNA lesions. A damage recognition complex composed of 2 UvrA and 2 UvrB subunits scans DNA for abnormalities. Upon binding of the UvrA(2)B(2) complex to a putative damaged site, the DNA wraps around one UvrB monomer. DNA wrap is dependent on ATP binding by UvrB and probably causes local melting of the DNA helix, facilitating insertion of UvrB beta-hairpin between the DNA strands. Then UvrB probes one DNA strand for the presence of a lesion. If a lesion is found the UvrA subunits dissociate and the UvrB-DNA preincision complex is formed. This complex is subsequently bound by UvrC and the second UvrB is released. If no lesion is found, the DNA wraps around the other UvrB subunit that will check the other stand for damage. This Chlamydia pneumoniae (Chlamydophila pneumoniae) protein is UvrABC system protein B.